A 259-amino-acid polypeptide reads, in one-letter code: 5'-nucleotidase SurE (259 aa).

A divalent metal cation is bound by residues D8, D9, S41, and N100.

This sequence belongs to the SurE nucleotidase family. It depends on a divalent metal cation as a cofactor.

Its subcellular location is the cytoplasm. The catalysed reaction is a ribonucleoside 5'-phosphate + H2O = a ribonucleoside + phosphate. Functionally, nucleotidase that shows phosphatase activity on nucleoside 5'-monophosphates. In Natranaerobius thermophilus (strain ATCC BAA-1301 / DSM 18059 / JW/NM-WN-LF), this protein is 5'-nucleotidase SurE.